A 311-amino-acid polypeptide reads, in one-letter code: 4-hydroxy-tetrahydrodipicolinate synthase (311 aa).

Residue T51 coordinates pyruvate. Y140 serves as the catalytic Proton donor/acceptor. K168 (schiff-base intermediate with substrate) is an active-site residue. Position 209 (I209) interacts with pyruvate.

The protein belongs to the DapA family. In terms of assembly, homotetramer; dimer of dimers.

It is found in the cytoplasm. It catalyses the reaction L-aspartate 4-semialdehyde + pyruvate = (2S,4S)-4-hydroxy-2,3,4,5-tetrahydrodipicolinate + H2O + H(+). It functions in the pathway amino-acid biosynthesis; L-lysine biosynthesis via DAP pathway; (S)-tetrahydrodipicolinate from L-aspartate: step 3/4. Its function is as follows. Catalyzes the condensation of (S)-aspartate-beta-semialdehyde [(S)-ASA] and pyruvate to 4-hydroxy-tetrahydrodipicolinate (HTPA). This Streptococcus pneumoniae (strain Hungary19A-6) protein is 4-hydroxy-tetrahydrodipicolinate synthase.